Consider the following 659-residue polypeptide: Cysteine-rich receptor-like protein kinase 18 (659 aa).

The N-terminal stretch at 1 to 27 (MATKSCELVLCFFVFFVISFSAISVSA) is a signal peptide. 2 Gnk2-homologous domains span residues 28 to 131 (QTCD…NRPF) and 137 to 250 (MDPL…VYPF). The Extracellular segment spans residues 28–287 (QTCDNTTGTF…KNDSRISGGK (260 aa)). N32, N57, N152, N162, N179, N180, N197, N275, and N279 each carry an N-linked (GlcNAc...) asparagine glycan. Residues 288 to 308 (IAAIVVVTVVTIILVVLGFVI) traverse the membrane as a helical segment. Topologically, residues 309-659 (SNRRKQKQEM…EATITDVNPR (351 aa)) are cytoplasmic. Residues 339–611 (FSERNKLGKG…PTMSTIHQML (273 aa)) form the Protein kinase domain. ATP contacts are provided by residues 345-353 (LGKGGFGEV) and K367. Y412 carries the post-translational modification Phosphotyrosine. Residue D464 is the Proton acceptor of the active site. S468 is subject to Phosphoserine. T504 carries the phosphothreonine modification. Phosphotyrosine is present on Y512.

It belongs to the protein kinase superfamily. Ser/Thr protein kinase family. CRK subfamily.

It localises to the membrane. It catalyses the reaction L-seryl-[protein] + ATP = O-phospho-L-seryl-[protein] + ADP + H(+). The enzyme catalyses L-threonyl-[protein] + ATP = O-phospho-L-threonyl-[protein] + ADP + H(+). This chain is Cysteine-rich receptor-like protein kinase 18 (CRK18), found in Arabidopsis thaliana (Mouse-ear cress).